The sequence spans 159 residues: Eukaryotic translation initiation factor 5A-2 (159 aa).

Positions 1-10 (MSDEEHHFEP) are enriched in basic and acidic residues. A disordered region spans residues 1–21 (MSDEEHHFEPAADAGASKTYP). At Lys52 the chain carries Hypusine.

The protein belongs to the eIF-5A family. Post-translationally, lys-52 undergoes hypusination, a unique post-translational modification that consists in the addition of a butylamino group from spermidine to lysine side chain, leading to the formation of the unusual amino acid hypusine. eIF-5As are the only known proteins to undergo this modification, which is essential for their function.

Translation factor that promotes translation elongation and termination, particularly upon ribosome stalling at specific amino acid sequence contexts. Binds between the exit (E) and peptidyl (P) site of the ribosome and promotes rescue of stalled ribosome: specifically required for efficient translation of polyproline-containing peptides as well as other motifs that stall the ribosome. Acts as a ribosome quality control (RQC) cofactor by joining the RQC complex to facilitate peptidyl transfer during CAT tailing step. The polypeptide is Eukaryotic translation initiation factor 5A-2 (Medicago sativa (Alfalfa)).